Here is a 410-residue protein sequence, read N- to C-terminus: Voltage-dependent chloride channel 1, chloroplastic (410 aa).

Over 1–110 (MYQSMNLSVS…RHLLSSFSSR (110 aa)) the chain is Lumenal, thylakoid. The chain crosses the membrane as a helical span at residues 111-131 (VILSLIPPVFFFTSVAVVIAS). The Stromal segment spans residues 132–147 (YNSAVALDWLPGIFPI). A helical membrane pass occupies residues 148 to 168 (LRSSSLPYQLTAPALALLLVF). The Lumenal, thylakoid segment spans residues 169–315 (RTEASYSRYE…PLSYTRLTSR (147 aa)). A run of 2 helical transmembrane segments spans residues 316–336 (FLVFWHLTLPIILWDECHWIV) and 337–357 (VPATFISAASLFCIEEVGVLI). Residues 358–410 (EEPFPMLALDELCDLVHSNIQEAVKSEKVIRNRIIAKIKLHEFKHSSNGRHRS) lie on the Lumenal, thylakoid side of the membrane.

Belongs to the anion channel-forming bestrophin (TC 1.A.46) family. Voltage-dependent chloride channel subfamily. As to expression, mostly expressed in flowers and leaves and, to a lower extent, in stems and roots.

It is found in the plastid. It localises to the chloroplast thylakoid membrane. It carries out the reaction chloride(in) = chloride(out). Its activity is regulated as follows. More active at positive than at negative voltages. Repressed by the general anion channel inhibitors dithiocyanatostilbene-2,20-disulphonic acid (DIDS) and niflumic acid. Its function is as follows. Voltage-dependent chloride (Cl) channel critical for proton motive force (PMF) partitioning across the thylakoid membrane by anion influx into the lumen during illumination, thus being required for photoprotection under fluctuating light conditions. Influences thylakoid ultrastructure, including lumen size and organization. During photosynthetic response on transition from dark to low light, involved in a sequential mechanism of adaptation; VCCN1 and CLCe first trigger the activation of photoprotection, which is later down-regulated by KEA3 to a low steady state, while adjusting electron transport. On transition from low to high light, accelerates the activation of photoprotection by building up a pH gradient across the thylakoid membrane. This Arabidopsis thaliana (Mouse-ear cress) protein is Voltage-dependent chloride channel 1, chloroplastic.